A 305-amino-acid chain; its full sequence is Serine/threonine-protein kinase 16 (305 aa).

Glycine 2 carries the N-myristoyl glycine lipid modification. S-palmitoyl cysteine attachment occurs at residues cysteine 6 and cysteine 8. Positions 20 to 293 constitute a Protein kinase domain; that stretch reads YLFVQKLGEG…PVLLSQLEAL (274 aa). ATP contacts are provided by residues 26 to 34 and lysine 49; that span reads LGEGGFSYV. The active-site Proton acceptor is the aspartate 148. The tract at residues 166–202 is activation loop; that stretch reads DLGSMNQACIQVEGSRQALALQDWAAQRCTISYRAPE. Serine 197 carries the phosphoserine; by autocatalysis modification. Tyrosine 198 carries the post-translational modification Phosphotyrosine; by autocatalysis.

It belongs to the protein kinase superfamily. Ser/Thr protein kinase family. As to quaternary structure, monomer. Interacts with DRG1 (via its N-terminal); the interaction phosphorylates DRG1. Post-translationally, mainly autophosphorylated on serine/threonine residues. Also autophosphorylated on Tyr-198. Expressed in heart, liver, brain, spleen, lung, skeletal muscle, kidney and testis.

It is found in the cytoplasm. Its subcellular location is the perinuclear region. It localises to the membrane. The enzyme catalyses L-seryl-[protein] + ATP = O-phospho-L-seryl-[protein] + ADP + H(+). It catalyses the reaction L-threonyl-[protein] + ATP = O-phospho-L-threonyl-[protein] + ADP + H(+). It carries out the reaction L-tyrosyl-[protein] + ATP = O-phospho-L-tyrosyl-[protein] + ADP + H(+). Membrane-associated protein kinase that phosphorylates on serine and threonine residues. In vitro substrates include DRG1, ENO1 and EIF4EBP1. Also autophosphorylates. May be involved in secretory vesicle trafficking or intracellular signaling. May have a role in regulating stromal-epithelial interactions that occur during ductal morphogenesis in the mammary gland. May be involved in TGF-beta signaling. Able to autophosphorylate on Tyr residue; it is however unclear whether it has tyrosine-protein kinase toward other proteins. This Rattus norvegicus (Rat) protein is Serine/threonine-protein kinase 16 (Stk16).